The sequence spans 639 residues: Elongation factor 4 (639 aa).

The tr-type G domain maps to 39-221 (TMIRNFCIIA…EIVRRVPAPV (183 aa)). GTP is bound by residues 51–56 (DHGKST) and 168–171 (NKID).

The protein belongs to the TRAFAC class translation factor GTPase superfamily. Classic translation factor GTPase family. LepA subfamily.

It localises to the cell membrane. The catalysed reaction is GTP + H2O = GDP + phosphate + H(+). Required for accurate and efficient protein synthesis under certain stress conditions. May act as a fidelity factor of the translation reaction, by catalyzing a one-codon backward translocation of tRNAs on improperly translocated ribosomes. Back-translocation proceeds from a post-translocation (POST) complex to a pre-translocation (PRE) complex, thus giving elongation factor G a second chance to translocate the tRNAs correctly. Binds to ribosomes in a GTP-dependent manner. This Frankia casuarinae (strain DSM 45818 / CECT 9043 / HFP020203 / CcI3) protein is Elongation factor 4.